The chain runs to 284 residues: Probable ADP-ribose 1''-phosphate phosphatase YML087W (284 aa).

4 residues coordinate substrate: Asp23, Gln55, Asn80, and Asp90. The Macro domain maps to Glu34–Leu230. Catalysis depends on residues Asn80 and Asp90. Cys128 and Cys136 are disulfide-bonded. Residue His145 is part of the active site. Residues Thr148 and Thr195 each coordinate substrate.

As to quaternary structure, homodimer.

It carries out the reaction ADP-alpha-D-ribose 1''-phosphate + H2O = ADP-D-ribose + phosphate. In terms of biological role, highly specific phosphatase involved in the metabolism of ADP-ribose 1''-phosphate (Appr1p) which is produced as a consequence of tRNA splicing. + phosphate. The chain is Probable ADP-ribose 1''-phosphate phosphatase YML087W from Saccharomyces cerevisiae (strain ATCC 204508 / S288c) (Baker's yeast).